The sequence spans 475 residues: Ribulose bisphosphate carboxylase large chain (475 aa).

Residues Met-1–Ser-2 constitute a propeptide that is removed on maturation. Position 3 is an N-acetylproline (Pro-3). The residue at position 14 (Lys-14) is an N6,N6,N6-trimethyllysine. Asn-123 and Thr-173 together coordinate substrate. Residue Lys-175 is the Proton acceptor of the active site. A substrate-binding site is contributed by Lys-177. Mg(2+) is bound by residues Lys-201, Asp-203, and Glu-204. At Lys-201 the chain carries N6-carboxylysine. His-294 acts as the Proton acceptor in catalysis. Substrate is bound by residues Arg-295, His-327, and Ser-379.

It belongs to the RuBisCO large chain family. Type I subfamily. In terms of assembly, heterohexadecamer of 8 large chains and 8 small chains; disulfide-linked. The disulfide link is formed within the large subunit homodimers. It depends on Mg(2+) as a cofactor. The disulfide bond which can form in the large chain dimeric partners within the hexadecamer appears to be associated with oxidative stress and protein turnover.

It is found in the plastid. It localises to the chloroplast. The catalysed reaction is 2 (2R)-3-phosphoglycerate + 2 H(+) = D-ribulose 1,5-bisphosphate + CO2 + H2O. It carries out the reaction D-ribulose 1,5-bisphosphate + O2 = 2-phosphoglycolate + (2R)-3-phosphoglycerate + 2 H(+). RuBisCO catalyzes two reactions: the carboxylation of D-ribulose 1,5-bisphosphate, the primary event in carbon dioxide fixation, as well as the oxidative fragmentation of the pentose substrate in the photorespiration process. Both reactions occur simultaneously and in competition at the same active site. The protein is Ribulose bisphosphate carboxylase large chain of Carica papaya (Papaya).